A 179-amino-acid polypeptide reads, in one-letter code: Cell division protein ZapC (179 aa).

It belongs to the ZapC family. In terms of assembly, interacts directly with FtsZ.

It localises to the cytoplasm. Contributes to the efficiency of the cell division process by stabilizing the polymeric form of the cell division protein FtsZ. Acts by promoting interactions between FtsZ protofilaments and suppressing the GTPase activity of FtsZ. In Aliivibrio salmonicida (strain LFI1238) (Vibrio salmonicida (strain LFI1238)), this protein is Cell division protein ZapC.